We begin with the raw amino-acid sequence, 231 residues long: MKILRKLLFWLIVVPVLLVLLLQLYFFLQIGWWVNHNPGSTSFMRHQLSILQEKNPKAQLKHKWIPYNRISNNLKRAIIASEDSNFSEHEGVDWDALQKAYEKNIKKGKVVAGGSTITQQLAKNLFLSGDRSYLRKGQEVIITYMLEYWMDKERIFEIYLNVVEWGVGIFGAEAAAQHYYGVSAAQLGAPQAARLAVMLPNPRFYDGHRGTAYLARRTDLILRRMNSAALP.

The helical transmembrane segment at 7-27 (LLFWLIVVPVLLVLLLQLYFF) threads the bilayer.

It belongs to the glycosyltransferase 51 family.

It localises to the cell inner membrane. The enzyme catalyses [GlcNAc-(1-&gt;4)-Mur2Ac(oyl-L-Ala-gamma-D-Glu-L-Lys-D-Ala-D-Ala)](n)-di-trans,octa-cis-undecaprenyl diphosphate + beta-D-GlcNAc-(1-&gt;4)-Mur2Ac(oyl-L-Ala-gamma-D-Glu-L-Lys-D-Ala-D-Ala)-di-trans,octa-cis-undecaprenyl diphosphate = [GlcNAc-(1-&gt;4)-Mur2Ac(oyl-L-Ala-gamma-D-Glu-L-Lys-D-Ala-D-Ala)](n+1)-di-trans,octa-cis-undecaprenyl diphosphate + di-trans,octa-cis-undecaprenyl diphosphate + H(+). It participates in cell wall biogenesis; peptidoglycan biosynthesis. Its function is as follows. Peptidoglycan polymerase that catalyzes glycan chain elongation from lipid-linked precursors. The polypeptide is Biosynthetic peptidoglycan transglycosylase (Janthinobacterium sp. (strain Marseille) (Minibacterium massiliensis)).